A 648-amino-acid chain; its full sequence is NAD(P)H-quinone oxidoreductase subunit 5, chloroplastic (648 aa).

The next 16 membrane-spanning stretches (helical) occupy residues 7-27 (AIWL…IGLL), 39-59 (LHGA…LGVL), 89-109 (VDPL…LVMI), 124-144 (FFVY…SPNL), 147-167 (VYGF…FWFT), 189-209 (LLLG…ASIA), 215-235 (LLIA…LVFM), 258-278 (TPIS…FLVA), 289-309 (LVME…ATMA), 327-347 (LGYM…FHLT), 354-374 (ALLF…VGFS), 395-415 (AMTF…ACFW), 432-452 (WLIA…IYFL), 472-492 (LGMV…GSLG), 518-538 (LAEF…GISL), and 625-645 (FYIL…TTHL).

It belongs to the complex I subunit 5 family. In terms of assembly, NDH is composed of at least 16 different subunits, 5 of which are encoded in the nucleus.

It is found in the plastid. The protein resides in the chloroplast thylakoid membrane. The enzyme catalyses a plastoquinone + NADH + (n+1) H(+)(in) = a plastoquinol + NAD(+) + n H(+)(out). It catalyses the reaction a plastoquinone + NADPH + (n+1) H(+)(in) = a plastoquinol + NADP(+) + n H(+)(out). Functionally, NDH shuttles electrons from NAD(P)H:plastoquinone, via FMN and iron-sulfur (Fe-S) centers, to quinones in the photosynthetic chain and possibly in a chloroplast respiratory chain. The immediate electron acceptor for the enzyme in this species is believed to be plastoquinone. Couples the redox reaction to proton translocation, and thus conserves the redox energy in a proton gradient. The sequence is that of NAD(P)H-quinone oxidoreductase subunit 5, chloroplastic (ndhF) from Nephroselmis olivacea (Green alga).